Consider the following 335-residue polypeptide: UDP-N-acetylglucosamine--N-acetylmuramyl-(pentapeptide) pyrophosphoryl-undecaprenol N-acetylglucosamine transferase (335 aa).

UDP-N-acetyl-alpha-D-glucosamine is bound by residues 9 to 11 (TGG), N123, S176, and Q274.

It belongs to the glycosyltransferase 28 family. MurG subfamily.

Its subcellular location is the cell inner membrane. It carries out the reaction di-trans,octa-cis-undecaprenyl diphospho-N-acetyl-alpha-D-muramoyl-L-alanyl-D-glutamyl-meso-2,6-diaminopimeloyl-D-alanyl-D-alanine + UDP-N-acetyl-alpha-D-glucosamine = di-trans,octa-cis-undecaprenyl diphospho-[N-acetyl-alpha-D-glucosaminyl-(1-&gt;4)]-N-acetyl-alpha-D-muramoyl-L-alanyl-D-glutamyl-meso-2,6-diaminopimeloyl-D-alanyl-D-alanine + UDP + H(+). The protein operates within cell wall biogenesis; peptidoglycan biosynthesis. Cell wall formation. Catalyzes the transfer of a GlcNAc subunit on undecaprenyl-pyrophosphoryl-MurNAc-pentapeptide (lipid intermediate I) to form undecaprenyl-pyrophosphoryl-MurNAc-(pentapeptide)GlcNAc (lipid intermediate II). In Campylobacter fetus subsp. fetus (strain 82-40), this protein is UDP-N-acetylglucosamine--N-acetylmuramyl-(pentapeptide) pyrophosphoryl-undecaprenol N-acetylglucosamine transferase.